The sequence spans 450 residues: Phosphoglucosamine mutase (450 aa).

The active-site Phosphoserine intermediate is the serine 101. 4 residues coordinate Mg(2+): serine 101, aspartate 241, aspartate 243, and aspartate 245. Serine 101 is subject to Phosphoserine.

This sequence belongs to the phosphohexose mutase family. Mg(2+) serves as cofactor. In terms of processing, activated by phosphorylation.

The catalysed reaction is alpha-D-glucosamine 1-phosphate = D-glucosamine 6-phosphate. In terms of biological role, catalyzes the conversion of glucosamine-6-phosphate to glucosamine-1-phosphate. The protein is Phosphoglucosamine mutase of Listeria welshimeri serovar 6b (strain ATCC 35897 / DSM 20650 / CCUG 15529 / CIP 8149 / NCTC 11857 / SLCC 5334 / V8).